A 426-amino-acid chain; its full sequence is tRNA(Ile)-lysidine synthase (426 aa).

Residue S21–S26 participates in ATP binding.

Belongs to the tRNA(Ile)-lysidine synthase family.

The protein localises to the cytoplasm. The enzyme catalyses cytidine(34) in tRNA(Ile2) + L-lysine + ATP = lysidine(34) in tRNA(Ile2) + AMP + diphosphate + H(+). Ligates lysine onto the cytidine present at position 34 of the AUA codon-specific tRNA(Ile) that contains the anticodon CAU, in an ATP-dependent manner. Cytidine is converted to lysidine, thus changing the amino acid specificity of the tRNA from methionine to isoleucine. This Enterobacter sp. (strain 638) protein is tRNA(Ile)-lysidine synthase.